The chain runs to 163 residues: Large ribosomal subunit protein uL10 (163 aa).

It belongs to the universal ribosomal protein uL10 family. Part of the ribosomal stalk of the 50S ribosomal subunit. The N-terminus interacts with L11 and the large rRNA to form the base of the stalk. The C-terminus forms an elongated spine to which L12 dimers bind in a sequential fashion forming a multimeric L10(L12)X complex.

Its function is as follows. Forms part of the ribosomal stalk, playing a central role in the interaction of the ribosome with GTP-bound translation factors. This chain is Large ribosomal subunit protein uL10 (rplJ), found in Pasteurella multocida (strain Pm70).